The chain runs to 424 residues: Phosphomethylpyrimidine synthase (424 aa).

Residues N66, M95, Y124, H163, 185–187 (SRG), 226–229 (DGMR), and E265 each bind substrate. Residue H269 participates in Zn(2+) binding. F292 provides a ligand contact to substrate. H333 is a Zn(2+) binding site. [4Fe-4S] cluster-binding residues include C408, C411, and C415.

The protein belongs to the ThiC family. It depends on [4Fe-4S] cluster as a cofactor.

The catalysed reaction is 5-amino-1-(5-phospho-beta-D-ribosyl)imidazole + S-adenosyl-L-methionine = 4-amino-2-methyl-5-(phosphooxymethyl)pyrimidine + CO + 5'-deoxyadenosine + formate + L-methionine + 3 H(+). The protein operates within cofactor biosynthesis; thiamine diphosphate biosynthesis. Functionally, catalyzes the synthesis of the hydroxymethylpyrimidine phosphate (HMP-P) moiety of thiamine from aminoimidazole ribotide (AIR) in a radical S-adenosyl-L-methionine (SAM)-dependent reaction. The polypeptide is Phosphomethylpyrimidine synthase (Thermotoga sp. (strain RQ2)).